A 437-amino-acid polypeptide reads, in one-letter code: 26S proteasome subunit RPT4 (437 aa).

A disordered region spans residues 1-51; the sequence is MSEEQDPLLAGLGETSGDNHTQQSHEQQPEQPQETEEHHEEEPSRVDPEQE. Serine 2 bears the N-acetylserine mark. The span at 20–32 shows a compositional bias: low complexity; it reads HTQQSHEQQPEQP. Residues 35-51 show a composition bias toward basic and acidic residues; the sequence is TEEHHEEEPSRVDPEQE. Residue 222-229 participates in ATP binding; sequence GPPGTGKT.

The protein belongs to the AAA ATPase family. N-acetylated by NAT1.

The 26S proteasome is involved in the ATP-dependent degradation of ubiquitinated proteins. The regulatory (or ATPase) complex confers ATP dependency and substrate specificity to the 26S complex. The sequence is that of 26S proteasome subunit RPT4 (RPT4) from Saccharomyces cerevisiae (strain ATCC 204508 / S288c) (Baker's yeast).